A 639-amino-acid polypeptide reads, in one-letter code: 3D-(3,5/4)-trihydroxycyclohexane-1,2-dione hydrolase (639 aa).

E62 provides a ligand contact to thiamine diphosphate. The thiamine pyrophosphate binding stretch occupies residues 438–518 (SLPGDLQRMW…INILLFDNCG (81 aa)). Positions 489 and 516 each coordinate Mg(2+).

Belongs to the TPP enzyme family. Mg(2+) serves as cofactor. Requires thiamine diphosphate as cofactor.

It catalyses the reaction 3D-3,5/4-trihydroxycyclohexane-1,2-dione + H2O = 5-deoxy-D-glucuronate + H(+). It functions in the pathway polyol metabolism; myo-inositol degradation into acetyl-CoA; acetyl-CoA from myo-inositol: step 3/7. Its function is as follows. Involved in the cleavage of the C1-C2 bond of 3D-(3,5/4)-trihydroxycyclohexane-1,2-dione (THcHDO) to yield 5-deoxy-glucuronate (5DG). This chain is 3D-(3,5/4)-trihydroxycyclohexane-1,2-dione hydrolase, found in Clostridium perfringens (strain ATCC 13124 / DSM 756 / JCM 1290 / NCIMB 6125 / NCTC 8237 / Type A).